A 437-amino-acid chain; its full sequence is Homogentisate 1,2-dioxygenase (437 aa).

The active-site Proton acceptor is His295. Positions 338 and 344 each coordinate Fe cation. Residues Tyr353 and His374 each contribute to the homogentisate site. His374 serves as a coordination point for Fe cation.

The protein belongs to the homogentisate dioxygenase family. As to quaternary structure, hexamer; dimer of trimers. Fe cation is required as a cofactor.

It carries out the reaction homogentisate + O2 = 4-maleylacetoacetate + H(+). It participates in amino-acid degradation; L-phenylalanine degradation; acetoacetate and fumarate from L-phenylalanine: step 4/6. Its function is as follows. Involved in the catabolism of homogentisate (2,5-dihydroxyphenylacetate or 2,5-OH-PhAc), a central intermediate in the degradation of phenylalanine and tyrosine. Catalyzes the oxidative ring cleavage of the aromatic ring of homogentisate to yield maleylacetoacetate. The sequence is that of Homogentisate 1,2-dioxygenase from Myxococcus xanthus (strain DK1622).